The primary structure comprises 38 residues: Toxin Bot33 (38 aa).

3 disulfide bridges follow: Cys8/Cys28, Cys14/Cys33, and Cys18/Cys35.

The protein belongs to the short scorpion toxin superfamily. Potassium channel inhibitor family. Expressed by the venom gland.

The protein localises to the secreted. In terms of biological role, a probable toxin that has no activity on the tested mammalian voltage-gated potassium channels (when tested at 1 uM) and is not toxic to mice. It resembles alpha toxins that block voltage-gated potassium channels. This is Toxin Bot33 from Buthus occitanus tunetanus (Common European scorpion).